We begin with the raw amino-acid sequence, 327 residues long: tRNA uridine(34) hydroxylase (327 aa).

Residues 122–218 (QENRCLVLDV…YGLKMGTGKW (97 aa)) enclose the Rhodanese domain. Catalysis depends on cysteine 178, which acts as the Cysteine persulfide intermediate.

This sequence belongs to the TrhO family.

The enzyme catalyses uridine(34) in tRNA + AH2 + O2 = 5-hydroxyuridine(34) in tRNA + A + H2O. In terms of biological role, catalyzes oxygen-dependent 5-hydroxyuridine (ho5U) modification at position 34 in tRNAs. The protein is tRNA uridine(34) hydroxylase of Chlamydia trachomatis serovar L2 (strain ATCC VR-902B / DSM 19102 / 434/Bu).